The primary structure comprises 259 residues: Bacillaene synthase dehydratase PksH (259 aa).

Catalysis depends on residues Asp68 and Glu137.

The protein belongs to the enoyl-CoA hydratase/isomerase family.

Its subcellular location is the cytoplasm. The protein operates within antibiotic biosynthesis; bacillaene biosynthesis. In terms of biological role, involved in some intermediate steps for the synthesis of the antibiotic polyketide bacillaene which is involved in secondary metabolism. Catalyzes the dehydration of the (S)-3-hydroxy-3-methylglutaryl group tethered to PksL to a 3-methylglutaconyl moiety. This is Bacillaene synthase dehydratase PksH (pksH) from Bacillus subtilis (strain 168).